The sequence spans 691 residues: Menaquinone reductase, molybdopterin-binding-like subunit (691 aa).

The tat-type signal signal peptide spans 1–27 (MALDRRGFLKFIGGATAGILATPVVWK). One can recognise a 4Fe-4S Mo/W bis-MGD-type domain in the interval 50–106 (NSYVPTVSKLCPTGIGVRVRLVDGRPVRVIGNPEHPLSKGGVSSIAAAEVQMLYSPA).

The protein belongs to the prokaryotic molybdopterin-containing oxidoreductase family. As to quaternary structure, the Qrc complex is composed of four subunits: QrcA, QrcB, QrcC and QrcD. Can form a supercomplex with the [NiFe] hydrogenase HynA1 and the tetraheme Type I cytochrome c3 TpIc(3), its physiological electron donors. There is no molybdenum or tungsten pterin cofactor present in the Qrc complex, despite the similarity of QrcB to molybdopterin-containing oxidoreductases. serves as cofactor. Predicted to be exported by the Tat system. The position of the signal peptide cleavage has not been experimentally proven.

The protein localises to the periplasm. Component of the respiratory Qrc complex, that catalyzes the reduction of the menaquinone pool using electrons transferred from the reduced periplasmic cytochrome c3, and which is probably involved in sulfate respiration. Is likely essential for growth on H(2) or formate since the periplasmic hydrogenases and/or formate dehydrogenases act as primary electron donors for the Qrc complex. The function of the QrcB subunit is unknown; in the absence of a catalytic site, it may provide a structural scaffold for the other subunits. The polypeptide is Menaquinone reductase, molybdopterin-binding-like subunit (Nitratidesulfovibrio vulgaris (strain ATCC 29579 / DSM 644 / CCUG 34227 / NCIMB 8303 / VKM B-1760 / Hildenborough) (Desulfovibrio vulgaris)).